The following is a 322-amino-acid chain: MAVPASDGSTASEWVTTGSVTVRVPGKVNLYLSVGDLRDDGYHDLTTVFHAVSLLDEVTVRNADVLSLRMIGEGAESLPADERNLAWRAAELMAEHVGRAPDVEITIEKSIPVAGGMAGGSADAAGVLVAMNTLWELGVPRRDLHALAAQLGSDVPFALHGGTALGSGRGEDLATVLARNTFHWVLAFAHRGLSTPKVFGELDRLRADTTRGLPRTDEPEPVLAALASGDPAELAALLGNDLQPAALSLYPDLRRTLRAGVEAGALAGIVSGSGPTCAFLCASAPAALDVGTQLSGAGVCRTVRVASGPVHGAHVVPAPSAS.

The active site involves Lys27. ATP is bound at residue 112–122; it reads PVAGGMAGGSA. The active site involves Asp154.

This sequence belongs to the GHMP kinase family. IspE subfamily.

The enzyme catalyses 4-CDP-2-C-methyl-D-erythritol + ATP = 4-CDP-2-C-methyl-D-erythritol 2-phosphate + ADP + H(+). Its pathway is isoprenoid biosynthesis; isopentenyl diphosphate biosynthesis via DXP pathway; isopentenyl diphosphate from 1-deoxy-D-xylulose 5-phosphate: step 3/6. Functionally, catalyzes the phosphorylation of the position 2 hydroxy group of 4-diphosphocytidyl-2C-methyl-D-erythritol. The polypeptide is 4-diphosphocytidyl-2-C-methyl-D-erythritol kinase (Mycolicibacterium smegmatis (strain ATCC 700084 / mc(2)155) (Mycobacterium smegmatis)).